The sequence spans 339 residues: NADH-quinone oxidoreductase subunit H (339 aa).

Transmembrane regions (helical) follow at residues 10–30, 50–70, 82–102, 115–135, 161–181, 187–207, 235–255, 275–295, and 311–331; these read FPLTVIALKVVAITIPLILCV, PNVVGPFGLLQPIADAVKLLF, ILFILAPIITFVLSLIGWAVI, VGVLYILAISSLSVYGIIIAG, MGLVIITVLLTTGTLNLSGII, LPWWIDLMLLPMSIVFFISVL, MGFALFFLGEYANMILVSAMT, IPGFFWFVFKVGFLLFCFLWI, and GWKVFLPFTLFGVVLVSSVLF.

This sequence belongs to the complex I subunit 1 family. As to quaternary structure, NDH-1 is composed of 14 different subunits. Subunits NuoA, H, J, K, L, M, N constitute the membrane sector of the complex.

It localises to the cell inner membrane. It catalyses the reaction a quinone + NADH + 5 H(+)(in) = a quinol + NAD(+) + 4 H(+)(out). Functionally, NDH-1 shuttles electrons from NADH, via FMN and iron-sulfur (Fe-S) centers, to quinones in the respiratory chain. The immediate electron acceptor for the enzyme in this species is believed to be ubiquinone. Couples the redox reaction to proton translocation (for every two electrons transferred, four hydrogen ions are translocated across the cytoplasmic membrane), and thus conserves the redox energy in a proton gradient. This subunit may bind ubiquinone. The sequence is that of NADH-quinone oxidoreductase subunit H from Rickettsia prowazekii (strain Madrid E).